Consider the following 708-residue polypeptide: Phosphate acetyltransferase (708 aa).

Residues 388–708 (EFCYNLKLLS…TIALTSIQSE (321 aa)) are phosphate acetyltransferase.

The protein in the N-terminal section; belongs to the CobB/CobQ family. In the C-terminal section; belongs to the phosphate acetyltransferase and butyryltransferase family. Homohexamer.

Its subcellular location is the cytoplasm. The enzyme catalyses acetyl-CoA + phosphate = acetyl phosphate + CoA. The protein operates within metabolic intermediate biosynthesis; acetyl-CoA biosynthesis; acetyl-CoA from acetate: step 2/2. Involved in acetate metabolism. This is Phosphate acetyltransferase (pta) from Buchnera aphidicola subsp. Acyrthosiphon pisum (strain APS) (Acyrthosiphon pisum symbiotic bacterium).